The sequence spans 149 residues: Active regulator of SIRT1 (149 aa).

A disordered region spans residues 1 to 64 (MSVSLLRKGL…GLRHDQKATA (64 aa)). Over residues 8 to 19 (KGLDLLREERSG) the composition is skewed to basic and acidic residues. Residues 30 to 41 (SSKPKPCLSSSK) show a composition bias toward low complexity. Positions 43–52 (GMRKQLRRLK) are enriched in basic residues.

Belongs to the AROS family. As to quaternary structure, part of the small subunit (SSU) processome, composed of more than 70 proteins and the RNA chaperone small nucleolar RNA (snoRNA) U3.

The protein localises to the nucleus. The protein resides in the nucleolus. Part of the small subunit (SSU) processome, first precursor of the small eukaryotic ribosomal subunit. During the assembly of the SSU processome in the nucleolus, many ribosome biogenesis factors, an RNA chaperone and ribosomal proteins associate with the nascent pre-rRNA and work in concert to generate RNA folding, modifications, rearrangements and cleavage as well as targeted degradation of pre-ribosomal RNA by the RNA exosome. Acts as a chaperone that specifically mediates the integration of RPS19 in state post-A1. Direct regulator of SIRT1. In Xenopus tropicalis (Western clawed frog), this protein is Active regulator of SIRT1 (rps19bp1).